Here is a 496-residue protein sequence, read N- to C-terminus: Probable CtpA-like serine protease (496 aa).

Over residues 1–16 (MDDKQHTSSSDDERAE) the composition is skewed to basic and acidic residues. A disordered region spans residues 1 to 27 (MDDKQHTSSSDDERAEIATSNQDQETN). Polar residues predominate over residues 18–27 (ATSNQDQETN). The chain crosses the membrane as a helical span at residues 39-59 (FISILIGTILITAVITVVAYI). The PDZ domain occupies 124 to 206 (TKSFNEGVSG…TEVTLTVQRG (83 aa)). Active-site charge relay system residues include serine 329, aspartate 340, and lysine 354.

This sequence belongs to the peptidase S41A family.

It localises to the cell membrane. The sequence is that of Probable CtpA-like serine protease from Staphylococcus aureus (strain COL).